The sequence spans 429 residues: Endoglucanase type C (429 aa).

The first 18 residues, 1–18 (MKSLSLILSALAVQVAVA), serve as a signal peptide directing secretion. Residue Q19 is modified to Pyrrolidone carboxylic acid. 9 cysteine pairs are disulfide-bonded: C36-C42, C66-C88, C78-C84, C156-C383, C190-C213, C194-C212, C233-C252, C241-C246, and C257-C333. N74 is a glycosylation site (N-linked (GlcNAc...) asparagine). E215 functions as the Nucleophile in the catalytic mechanism. E220 serves as the catalytic Proton donor. Residues N265 and N318 are each glycosylated (N-linked (GlcNAc...) asparagine).

This sequence belongs to the glycosyl hydrolase 7 (cellulase C) family.

It catalyses the reaction Endohydrolysis of (1-&gt;4)-beta-D-glucosidic linkages in cellulose, lichenin and cereal beta-D-glucans.. The protein is Endoglucanase type C of Fusarium oxysporum (Fusarium vascular wilt).